Reading from the N-terminus, the 227-residue chain is Octanoyltransferase (227 aa).

Positions 47 to 223 constitute a BPL/LPL catalytic domain; sequence EDTADEIWLL…HLLRLLPPGV (177 aa). Residues 87–94, 154–156, and 167–169 contribute to the substrate site; these read RGGQITYH, ALG, and GLA. C185 acts as the Acyl-thioester intermediate in catalysis.

The protein belongs to the LipB family.

Its subcellular location is the cytoplasm. It carries out the reaction octanoyl-[ACP] + L-lysyl-[protein] = N(6)-octanoyl-L-lysyl-[protein] + holo-[ACP] + H(+). Its pathway is protein modification; protein lipoylation via endogenous pathway; protein N(6)-(lipoyl)lysine from octanoyl-[acyl-carrier-protein]: step 1/2. Its function is as follows. Catalyzes the transfer of endogenously produced octanoic acid from octanoyl-acyl-carrier-protein onto the lipoyl domains of lipoate-dependent enzymes. Lipoyl-ACP can also act as a substrate although octanoyl-ACP is likely to be the physiological substrate. The sequence is that of Octanoyltransferase from Azoarcus sp. (strain BH72).